Consider the following 282-residue polypeptide: Elongation factor Ts (282 aa).

Residues Thr-81–Val-84 form an involved in Mg(2+) ion dislocation from EF-Tu region. Positions Lys-218 to Gly-270 are enriched in low complexity. The segment at Lys-218 to Lys-282 is disordered. The segment covering Ser-273 to Lys-282 has biased composition (basic residues).

Belongs to the EF-Ts family.

It localises to the cytoplasm. Its function is as follows. Associates with the EF-Tu.GDP complex and induces the exchange of GDP to GTP. It remains bound to the aminoacyl-tRNA.EF-Tu.GTP complex up to the GTP hydrolysis stage on the ribosome. The chain is Elongation factor Ts from Synechococcus sp. (strain JA-3-3Ab) (Cyanobacteria bacterium Yellowstone A-Prime).